The chain runs to 687 residues: Chloride channel protein ClC-Kb (687 aa).

The Cytoplasmic segment spans residues 1–50 (MEEFVGLREGSSGNPVTLQELWGPCPRIRRGIRGGLEWLKQKLFRLGEDW). 2 helical membrane-spanning segments follow: residues 51 to 82 (YFLM…QWLY) and 91 to 111 (LRYL…SGFS). Positions 116–127 (PSSGGSGIPEVK) form an intramembrane region, helical. A chloride-binding site is contributed by Ser-121. 2 helical membrane-spanning segments follow: residues 141 to 160 (IKNF…CGST) and 161 to 180 (LFLG…AAYL). Asn-193 carries an N-linked (GlcNAc...) asparagine glycan. Positions 203-224 (AAAAVGVATVFAAPFSGVLFSI) form an intramembrane region, helical. Residues 236–255 (YWRGFFAATCGAFMFRLLAV) form a helical membrane-spanning segment. Ca(2+) contacts are provided by Glu-259, Glu-261, Asp-278, and Glu-281. 2 helical membrane passes run 282-310 (IFFF…FGFI) and 325-342 (PVYS…TYPP). Residues 349–360 (ASRLSMKQHLDS) constitute an intramembrane region (helical). 2 helical membrane passes run 400 to 420 (GTLA…TTIP) and 421 to 440 (MPAG…GRLF). Phe-426 is a chloride binding site. An intramembrane region (helical) is located at residues 464 to 496 (GGYALAGAAAFSGAVTHTISTALLAFEVTGQIV). The chain crosses the membrane as a helical span at residues 500 to 520 (PVLMAVLAANAIAQSCQPSFY). Over 521 to 687 (DGTVIVKKLP…SNLTNPPAPK (167 aa)) the chain is Cytoplasmic. 2 CBS domains span residues 551–609 (MNHS…EPPS) and 626–684 (CPTE…TNPP).

The protein belongs to the chloride channel (TC 2.A.49) family. CLCNKB subfamily. As to quaternary structure, homodimer. Interacts with BSND. In terms of processing, N-glycosylated.

Its subcellular location is the basolateral cell membrane. The catalysed reaction is chloride(in) = chloride(out). It carries out the reaction iodide(out) = iodide(in). The enzyme catalyses nitrate(in) = nitrate(out). It catalyses the reaction bromide(in) = bromide(out). With respect to regulation, activated by extracellular Ca(2+) and inhibited by extracellular acidic pH. In terms of biological role, anion-selective channel permeable to small monovalent anions with ion selectivity for chloride &gt; bromide &gt; nitrate &gt; iodide. Forms a homodimeric channel where each subunit has its own ion conduction pathway. May conduct double-barreled currents controlled by two types of gates, two fast gates that control each subunit independently and a slow common gate that opens and shuts off both subunits simultaneously. Assembles with the regulatory subunit BSND/Barttin for sorting at the basolateral plasma membrane domain and functional switch to the ion conducting state. CLCNKB:BSND channels display mostly a linear current-voltage relationship controlled by common gate. Mediates chloride conductance along nephron segments, namely the thick ascending limb of Henle's loop, convoluted tubule and the collecting duct, contributing to the maintenance of systemic acid-base and electrolyte homeostasis. Conducts chloride currents in the stria vascularis of the inner ear to establish the endocochlear potential necessary for normal hearing. This chain is Chloride channel protein ClC-Kb, found in Homo sapiens (Human).